Here is a 188-residue protein sequence, read N- to C-terminus: Mediator of RNA polymerase II transcription subunit 11 (188 aa).

The stretch at 46–72 (KNKMEDNANNFKKLITQVENELSAQMQ) forms a coiled coil. The disordered stretch occupies residues 116–188 (DPTSDEPQTT…MTDDDDDMEQ (73 aa)). The segment covering 123 to 141 (QTTEEDEEDGSDDLNEDGA) has biased composition (acidic residues). A compositionally biased stretch (low complexity) spans 146–155 (SSTVTSSTTD). Basic and acidic residues predominate over residues 171–180 (SQEESGRQMT).

This sequence belongs to the Mediator complex subunit 11 family. As to quaternary structure, component of the Mediator complex.

The protein localises to the nucleus. Its function is as follows. Component of the Mediator complex, a coactivator involved in the regulated transcription of nearly all RNA polymerase II-dependent genes. Mediator functions as a bridge to convey information from gene-specific regulatory proteins to the basal RNA polymerase II transcription machinery. Mediator is recruited to promoters by direct interactions with regulatory proteins and serves as a scaffold for the assembly of a functional pre-initiation complex with RNA polymerase II and the general transcription factors. The protein is Mediator of RNA polymerase II transcription subunit 11 (mdt-11) of Caenorhabditis elegans.